The chain runs to 242 residues: Synaptonemal complex central element protein 1-like (242 aa).

The interval 1–24 is disordered; the sequence is MAGKLKPLNVEAPEATEEAEGQAK. Residues 44–181 are a coiled coil; it reads LEPQIEDLIS…LREVERRLHS (138 aa). Positions 206 to 242 are disordered; the sequence is VRSAPEVGAGEGEAGPELPRARDEEDPEPPVAAPDAL.

The protein belongs to the SYCE family.

In terms of biological role, may be involved in meiosis. The protein is Synaptonemal complex central element protein 1-like (SYCE1L) of Homo sapiens (Human).